Reading from the N-terminus, the 125-residue chain is MRPRCCILALVCWITVFLLQCSKGTTDAPVGSGLWLCQPTPRCGNKIYNPSEQCCYDDAILSLKETRRCGSTCTFWPCFELCCPESFGPQQKFLVKLRVLGMKSQCHLSPISRSCTRNRRHVLYP.

The signal sequence occupies residues methionine 1–glycine 24.

It belongs to the IGFL family. As to expression, detected in the cerebellum.

Its subcellular location is the secreted. Its function is as follows. Potential ligand of the IGFLR1 cell membrane receptor. The protein is Insulin growth factor-like family member 3 (IGFL3) of Homo sapiens (Human).